A 445-amino-acid polypeptide reads, in one-letter code: 3-phosphoshikimate 1-carboxyvinyltransferase (445 aa).

The span at 1–20 (MSSTHPGRTIRSGATQNLSG) shows a compositional bias: polar residues. The tract at residues 1-24 (MSSTHPGRTIRSGATQNLSGTIRP) is disordered. 3-phosphoshikimate-binding residues include Lys28, Ser29, and Arg33. Phosphoenolpyruvate is bound at residue Lys28. Phosphoenolpyruvate contacts are provided by Gly101 and Arg129. Residues Ser174, Gln176, Asp322, and Lys349 each contribute to the 3-phosphoshikimate site. Residue Gln176 coordinates phosphoenolpyruvate. Asp322 serves as the catalytic Proton acceptor. Positions 353 and 397 each coordinate phosphoenolpyruvate.

It belongs to the EPSP synthase family. In terms of assembly, monomer.

It localises to the cytoplasm. It carries out the reaction 3-phosphoshikimate + phosphoenolpyruvate = 5-O-(1-carboxyvinyl)-3-phosphoshikimate + phosphate. It functions in the pathway metabolic intermediate biosynthesis; chorismate biosynthesis; chorismate from D-erythrose 4-phosphate and phosphoenolpyruvate: step 6/7. Functionally, catalyzes the transfer of the enolpyruvyl moiety of phosphoenolpyruvate (PEP) to the 5-hydroxyl of shikimate-3-phosphate (S3P) to produce enolpyruvyl shikimate-3-phosphate and inorganic phosphate. The polypeptide is 3-phosphoshikimate 1-carboxyvinyltransferase (Magnetococcus marinus (strain ATCC BAA-1437 / JCM 17883 / MC-1)).